The primary structure comprises 546 residues: Zinc metalloproteinase nas-9 (546 aa).

Residues 1-14 form the signal peptide; sequence MIFLLFVVFPFVYA. Residues 15–300 constitute a propeptide that is removed on maturation; sequence QLLPELLAGF…GGGGGGRVPR (286 aa). The N-linked (GlcNAc...) asparagine glycan is linked to Asn248. In terms of domain architecture, Peptidase M12A spans 308-507; it reads SAVQKWDIWK…IRLLKKMYCR (200 aa). 5 cysteine pairs are disulfide-bonded: Cys347–Cys506, Cys372–Cys392, Cys510–Cys546, Cys517–Cys539, and Cys526–Cys543. His401 contacts Zn(2+). The active site involves Glu402. 2 residues coordinate Zn(2+): His405 and His411. The ShKT domain maps to 510-546; the sequence is CDDQNVHCGTWALHGYCKMKEQMKWMNENCKASCDKC.

Zn(2+) is required as a cofactor. As to expression, expressed in hypodermis, uterus and spermatheca.

The protein localises to the secreted. In terms of biological role, metalloprotease. The chain is Zinc metalloproteinase nas-9 (nas-9) from Caenorhabditis elegans.